We begin with the raw amino-acid sequence, 562 residues long: Pentatricopeptide repeat-containing protein At3g22670, mitochondrial (562 aa).

The transit peptide at 1-31 directs the protein to the mitochondrion; sequence MLTKLRISKLVSYTLPRRIFQRRFLVTNNTA. 10 PPR repeats span residues 165–199, 202–232, 238–268, 272–306, 307–341, 342–376, 377–411, 412–446, 450–484, and 485–519; these read SGHT…EESK, TLDT…MEKS, DTIA…LFDT, DART…EFTP, DVVT…GCNP, NVVT…GCVP, DAKF…GVRR, DVLV…EGES, NVET…DVSI, and DVST…GMVP.

The protein belongs to the PPR family. P subfamily.

The protein resides in the mitochondrion. This chain is Pentatricopeptide repeat-containing protein At3g22670, mitochondrial, found in Arabidopsis thaliana (Mouse-ear cress).